Reading from the N-terminus, the 204-residue chain is Dual-action ribosomal maturation protein DarP (204 aa).

Disordered stretches follow at residues 1–31 (MPPMTRKTRIQPIEPVAEEDDNGYDRPSKSQ) and 182–204 (GGASDSDDEAADDAGDDHDDDEA). Acidic residues predominate over residues 186–204 (DSDDEAADDAGDDHDDDEA).

This sequence belongs to the DarP family.

The protein localises to the cytoplasm. Member of a network of 50S ribosomal subunit biogenesis factors which assembles along the 30S-50S interface, preventing incorrect 23S rRNA structures from forming. Promotes peptidyl transferase center (PTC) maturation. The polypeptide is Dual-action ribosomal maturation protein DarP (Burkholderia orbicola (strain MC0-3)).